A 263-amino-acid chain; its full sequence is Splicing regulator sde2 (263 aa).

A propeptide spans 1–84 (MECKTVFLNG…LTLCTRVLGG (84 aa)) (UBL). Disordered regions lie at residues 95-118 (AGGRMSKKRNEQENQDSCRDLDGN), 137-158 (PAETRAKKEAKKQKLNKVLAAD), and 194-263 (STSA…LYGL). Residues 102–117 (KRNEQENQDSCRDLDG) show a composition bias toward basic and acidic residues. Composition is skewed to low complexity over residues 194–209 (STSASSFSSGSNGATT) and 219–230 (NNNSSINSWSRR).

Belongs to the SDE2 family. Interacts with cay1/cactin. Interacts with prp19. Interacts with cwf12. Interacts with cdc5. In terms of processing, the N-terminal UBL (ubiquitin-like) propeptide is cleaved at Gly-84 by the deubiquitinating enzymes ubp5 and ubp15; the resulting mature sde2 associates with spliceosomes. Post-translationally, polyubiquitinated; ubiquitination is partially dependent on ubr11.

It localises to the cytoplasm. The protein resides in the nucleus. In terms of biological role, plays a role in pre-mRNA splicing by facilitating excision of introns featuring relatively long (&gt;21 nucleotides) spacing between the branchpoint and 3'-splice site (ss). Recruits cactin to the spliceosome which may enable folding of RNA between the branchpoint and 3'-ss, to guide the splice site towards the spliceosome's catalytic center. Required for proper chromatin organization by assisting splicing of components involved in genomic stability and telomere organization. The chain is Splicing regulator sde2 from Schizosaccharomyces pombe (strain 972 / ATCC 24843) (Fission yeast).